A 1064-amino-acid chain; its full sequence is Lysine-specific demethylase 4A (1064 aa).

At Ala-2 the chain carries N-acetylalanine. The 43-residue stretch at 14 to 56 (IMTFYPTMEEFRNFSRYIAYIESQGAHRAGLAKVVPPKEWKPR) folds into the JmjN domain. A 2-oxoglutarate-binding site is contributed by Tyr-132. Residues 142–308 (EQHVDEWNIG…YGKQAVLCSC (167 aa)) form the JmjC domain. Residues His-188 and Glu-190 each coordinate Fe cation. 2 residues coordinate 2-oxoglutarate: Asn-198 and Lys-206. The Zn(2+) site is built by Cys-234 and His-240. Lys-241 is a 2-oxoglutarate binding site. Position 276 (His-276) interacts with Fe cation. Zn(2+)-binding residues include Cys-306 and Cys-308. Disordered stretches follow at residues 354 to 384 (LKDSGGLTPRAGSEECPEEDVEAADQGEEGD), 434 to 489 (LAPV…LDLS), 502 to 537 (SGSKKKSSSSLGSTSSQDSVSSDSETAESVSCQGQE), 549 to 573 (RGDGKAATGEPSVKKKRSAPRSISE), and 590 to 643 (NKKT…LSQL). The segment covering 368–382 (ECPEEDVEAADQGEE) has biased composition (acidic residues). A compositionally biased stretch (basic and acidic residues) spans 460–472 (TEVKFEELKNVKL). The span at 473–482 (EEEDEEDEPE) shows a compositional bias: acidic residues. The segment covering 509–525 (SSSLGSTSSQDSVSSDS) has biased composition (low complexity). At Ser-523 the chain carries Phosphoserine. Positions 528–537 (AESVSCQGQE) are enriched in polar residues. Over residues 593–608 (TKGRRQPLSKLPRHHP) the composition is skewed to basic residues. The tract at residues 597–638 (RQPLSKLPRHHPLVLQECGSDDETSEQLTPEEEAEETEAWAK) is interaction with NCOR1. Over residues 615-634 (GSDDETSEQLTPEEEAEETE) the composition is skewed to acidic residues. The PHD-type 1 zinc-finger motif lies at 709 to 767 (MCFTTTGCSTDINLSTPYLEEDGTSMLVSCKKCSVRVHASCYGVPPAKASEEWMCSRCS). Residues 772-805 (EEDCCLCSLRGGALQRANDDRWVHVSCAVAILEA) form a C2HC pre-PHD-type zinc finger. The PHD-type 2 zinc finger occupies 828-885 (LKCVFCKKRRKRNAGCCVQCSHGRCPTAFHVSCAQAAGVMMQPDDWPFVVFITCFRHK). 2 consecutive Tudor domains span residues 897 to 954 (LSIT…CLQL) and 955 to 1011 (GPPA…EELP).

It belongs to the JHDM3 histone demethylase family. As to quaternary structure, interacts with histone deacetylase proteins HDAC1, HDAC2 and HDAC3. Interacts with RB and NCOR1. Interacts with VRK1. The cofactor is Fe(2+). Ubiquitinated by RNF8 and RNF168, leading to its degradation. Degradation promotes accessibility of H4K20me2 mark for DNA repair protein TP53BP1, which is then recruited. Also ubiquitinated by the SCF(FBXO22) complex; leading to proteasomal degradation. In terms of tissue distribution, widely expressed.

The protein localises to the nucleus. The catalysed reaction is N(6),N(6),N(6)-trimethyl-L-lysyl(9)-[histone H3] + 2 2-oxoglutarate + 2 O2 = N(6)-methyl-L-lysyl(9)-[histone H3] + 2 formaldehyde + 2 succinate + 2 CO2. The enzyme catalyses N(6),N(6),N(6)-trimethyl-L-lysyl(36)-[histone H3] + 2 2-oxoglutarate + 2 O2 = N(6)-methyl-L-lysyl(36)-[histone H3] + 2 formaldehyde + 2 succinate + 2 CO2. Histone demethylase that specifically demethylates 'Lys-9' and 'Lys-36' residues of histone H3, thereby playing a central role in histone code. Does not demethylate histone H3 'Lys-4', H3 'Lys-27' nor H4 'Lys-20'. Demethylates trimethylated H3 'Lys-9' and H3 'Lys-36' residue, while it has no activity on mono- and dimethylated residues. Demethylation of Lys residue generates formaldehyde and succinate. Participates in transcriptional repression of ASCL2 and E2F-responsive promoters via the recruitment of histone deacetylases and NCOR1, respectively. The polypeptide is Lysine-specific demethylase 4A (Kdm4a) (Mus musculus (Mouse)).